We begin with the raw amino-acid sequence, 151 residues long: MSSQPKILLVNGPNLNLLGRREPGHYGHHTLEQIVDDLKQSATQAGIQLDHIQSNAEHLLIEAIHNSDADMVIINPAAFTHTSVALRDALLGVAIPFIEVHLSNVHSREPFRHHSYFSDKAIGVICGLGAQGYQFALQAAIARIHAAEKQG.

Tyrosine 26 (proton acceptor) is an active-site residue. Asparagine 75, histidine 81, and aspartate 88 together coordinate substrate. The Proton donor role is filled by histidine 101. Substrate is bound by residues 102–103 and arginine 112; that span reads LS.

Belongs to the type-II 3-dehydroquinase family. In terms of assembly, homododecamer.

The catalysed reaction is 3-dehydroquinate = 3-dehydroshikimate + H2O. It participates in metabolic intermediate biosynthesis; chorismate biosynthesis; chorismate from D-erythrose 4-phosphate and phosphoenolpyruvate: step 3/7. Catalyzes a trans-dehydration via an enolate intermediate. The polypeptide is 3-dehydroquinate dehydratase (Shewanella halifaxensis (strain HAW-EB4)).